A 65-amino-acid chain; its full sequence is DNA-binding protein 7e (65 aa).

Lysine 7 carries the post-translational modification N6-methyllysine. Lysine 63 and lysine 64 each carry N6-methyllysine; partial.

Belongs to the 7 kDa DNA-binding/endoribonuclease P2 family. As to quaternary structure, monomer. In terms of processing, lys-63 was found to be 25% monomethylated and Lys-64 was found to be 36% monomethylated.

The protein resides in the cytoplasm. Its function is as follows. Can constrain negative DNA supercoils. May be involved in maintaining the integrity of the genome at high temperature. The sequence is that of DNA-binding protein 7e from Sulfolobus acidocaldarius (strain ATCC 33909 / DSM 639 / JCM 8929 / NBRC 15157 / NCIMB 11770).